We begin with the raw amino-acid sequence, 186 residues long: Ribosome-recycling factor (186 aa).

The protein belongs to the RRF family.

It is found in the cytoplasm. Responsible for the release of ribosomes from messenger RNA at the termination of protein biosynthesis. May increase the efficiency of translation by recycling ribosomes from one round of translation to another. This is Ribosome-recycling factor from Rubrobacter xylanophilus (strain DSM 9941 / JCM 11954 / NBRC 16129 / PRD-1).